A 1758-amino-acid polypeptide reads, in one-letter code: MCFFLGSRLAYAENIDGSSTISNRDISGSLNIGINKDANIDINGTVNIKDYFSVATCNGQSSTCPEGGLNASAKIDKSASVGASVTIVGDSSKGELNIDGGSTLYTQQLWVSGNDNDKTSNVSDDSNGSLSINNGSNVFVVSSQDDTPFKTNSVKWNQNIISQGNNITDGTVSSGDLVLGKTGNGIIDIDNNSKLDVKNDVVVSTGVDGIPNEKPSEINIKNESNFSVHGDMKGGISAAGKLNLNMDNSSNLHVDKNIAVGIGRESNITVSASRESSIFSDGNFTVATGNNSNANLKLDASNLSVNGVSTIGSGDGSITKFDIKNGSVVTSSSDMTLAKGKGTQANINISSSELNTGSLSVGEGDNADVKMTGSGASVSSKKTFTVAKGNNASATLNYTGSKIDIGSGYIGEGESAKTQLELNNSALTASGKVFIGQGNTTQTNLTLNDKSSVNVSGEMSVAQGSSASVDVTATNAVLSADSLSLGGGEAAKVTMTGSGATVSSKNTFTVAKGNNASATLDYTDSKIDIGSGYIGEGEAAKTQLELNNSALTASGKVFIGQGNTTQTNLTLNDKSSVNVSDEMSVAQGSSASVDVTITNAVLSADSLSLGGGEAAKVTMTGNRATISSGNTFTVAKGNNASATLDYSDSKINIGNGYIGGGEKAQTVLTLKDSALAATGDVIMGQGQETQTDLTLSPQSSIKVSGNMSIAQGNAASAKVIVDNADLSANSMSIGEGDTAAVTMTGNGATISSGNTFTVARGNNASATLDYSDSKINIGNGYIGGGEKAQTVLTLKDSALAATGDVIMGQGQETQTDLTLSPQSSIKVSGNMSIAQGNAASAKVIVDNADLSANSMSIGEGDTAAVTMTGNGATISSGNTFTVARGNNASATLDYSDSKINIGNGYIGVGEKSHTLLKLDNSTFHAAGNIDIGKGSSTIANVSVGAGSNMSIKGNASIGVGDQAKAKFSVKDSVLNIGSSLVLGQGNSTEAEMSVEHSQLYSGGLLLGTANNAVVSMSANNSEISVVGDYTVAKGDGSEATLIYKNSDINLGNGILGAGSGVKTDLSLDNSKFVASDGIIIGKGDNAITNLSISDHSVFKGERINIGNGSYSKNSISITGNSIFDFGSSQESTIGEGDYSQSLVTINDASVYGDGSLTLAKGNNSFAVLNLQDNAVTNANNISLATGLGSKAIVNVSNMNSGQFNPVSMGAGDGYAEVNFDGVNGYTLSTNFICMDSGSCADTVINVNRGTVSLSGTNDWKGQINVYDGTRLDARGNDAVDGILNVSKEAQVDFNGYSQHMTGIDNKGMIYLSDGSASSDVYLDKDYVAHDGSGVQFGIFGQKEADVMHVKGDTSGSSGIVVTTNSKNKIKKGGDILLVEVNGDSSGSFYLNSLIKNGKEYKVTGDYIDVGAWEYALNKKRKNWYLSVDMRPEPGAFINNSKSMLDMFALQRYDIPGQHRYPTLFENLYNNGMWIQFNNNSGSNSEVYDNLKTSYSLNTMMIGGDIYNWTDGYNYSHIGIMGGMGSAANKTTSTNNKRATGNVDGYTLGLYHVFQQNISDGLNESERQGLWTYSSIQYMDYDNSVSSTNNFKANYGVNGFRLTGEVGYLKNIGGIQPSDFYVEPKLYLSHTELSGGVVEDLQGGKITYPNSLTIIEPGVFFSYRKTHESTSNDEAMFKDYIKQSVVDAWFGGGYSFKTGNYSRTNFDSDMVEYNTSDNFALKSGVEFEFLKDARLLLTSSYSINNDRNLSFILGGNYYF.

Positions 1–12 (MCFFLGSRLAYA) are cleaved as a signal peptide. An Autotransporter domain is found at 1465 to 1758 (ENLYNNGMWI…SFILGGNYYF (294 aa)).

It localises to the cell outer membrane. This is an uncharacterized protein from Escherichia coli (strain K12).